Here is a 46-residue protein sequence, read N- to C-terminus: Protein PsbN (46 aa).

Residues 7–27 traverse the membrane as a helical segment; that stretch reads GLSIAITFAVILLALTGFSIY.

The protein belongs to the PsbN family.

It localises to the cellular thylakoid membrane. In terms of biological role, may play a role in photosystem I and II biogenesis. This Synechococcus elongatus (strain ATCC 33912 / PCC 7942 / FACHB-805) (Anacystis nidulans R2) protein is Protein PsbN.